A 483-amino-acid polypeptide reads, in one-letter code: ATP synthase subunit beta (483 aa).

162-169 is a binding site for ATP; the sequence is GGAGVGKT.

It belongs to the ATPase alpha/beta chains family. As to quaternary structure, F-type ATPases have 2 components, CF(1) - the catalytic core - and CF(0) - the membrane proton channel. CF(1) has five subunits: alpha(3), beta(3), gamma(1), delta(1), epsilon(1). CF(0) has four main subunits: a(1), b(1), b'(1) and c(9-12).

The protein resides in the cellular thylakoid membrane. It catalyses the reaction ATP + H2O + 4 H(+)(in) = ADP + phosphate + 5 H(+)(out). Produces ATP from ADP in the presence of a proton gradient across the membrane. The catalytic sites are hosted primarily by the beta subunits. This chain is ATP synthase subunit beta, found in Prochloron didemni.